We begin with the raw amino-acid sequence, 212 residues long: MATSVAPSPVPESSPLSHATEVLNLPNAYITQPHPIPAAPWETFRSKLSTKHTLCFALTLLLTLGGTISAGYAGYTGNWIICGIGLGIIVLTLILALLLAIPLKNKQTGTKLIDEISQDISSIGSGFVQRYGLMFSTIKSVHLPELTTQNQEKTRILNEIEAKKESIQNLELKITECQNKLAQKQPKRKSSQKSFMRSIKHLSKNPVILFDC.

A run of 2 helical transmembrane segments spans residues 54 to 74 and 79 to 99; these read LCFA…GYAG and WIIC…ALLL.

Its subcellular location is the cell membrane. This is an uncharacterized protein from Chlamydia pneumoniae (Chlamydophila pneumoniae).